The following is a 455-amino-acid chain: Serine--tRNA ligase (455 aa).

252-254 (TSE) is an L-serine binding site. Residues 283–285 (RKE) and Val299 each bind ATP. Glu306 lines the L-serine pocket. 370 to 373 (EVVS) serves as a coordination point for ATP. An L-serine-binding site is contributed by Thr406.

The protein belongs to the class-II aminoacyl-tRNA synthetase family. Type-1 seryl-tRNA synthetase subfamily. Homodimer. The tRNA molecule binds across the dimer.

The protein localises to the cytoplasm. It carries out the reaction tRNA(Ser) + L-serine + ATP = L-seryl-tRNA(Ser) + AMP + diphosphate + H(+). It catalyses the reaction tRNA(Sec) + L-serine + ATP = L-seryl-tRNA(Sec) + AMP + diphosphate + H(+). The protein operates within aminoacyl-tRNA biosynthesis; selenocysteinyl-tRNA(Sec) biosynthesis; L-seryl-tRNA(Sec) from L-serine and tRNA(Sec): step 1/1. In terms of biological role, catalyzes the attachment of serine to tRNA(Ser). Is also able to aminoacylate tRNA(Sec) with serine, to form the misacylated tRNA L-seryl-tRNA(Sec), which will be further converted into selenocysteinyl-tRNA(Sec). This is Serine--tRNA ligase from Thermococcus sibiricus (strain DSM 12597 / MM 739).